A 212-amino-acid polypeptide reads, in one-letter code: Uracil phosphoribosyltransferase (212 aa).

Residues Arg78, Arg103, and 130 to 138 contribute to the 5-phospho-alpha-D-ribose 1-diphosphate site; that span reads DPMLATGSS. Uracil contacts are provided by residues Ile193 and 198–200; that span reads GDA. A 5-phospho-alpha-D-ribose 1-diphosphate-binding site is contributed by Asp199.

Belongs to the UPRTase family. It depends on Mg(2+) as a cofactor.

It carries out the reaction UMP + diphosphate = 5-phospho-alpha-D-ribose 1-diphosphate + uracil. Its pathway is pyrimidine metabolism; UMP biosynthesis via salvage pathway; UMP from uracil: step 1/1. Its activity is regulated as follows. Allosterically activated by GTP. Its function is as follows. Catalyzes the conversion of uracil and 5-phospho-alpha-D-ribose 1-diphosphate (PRPP) to UMP and diphosphate. The chain is Uracil phosphoribosyltransferase from Pseudomonas savastanoi pv. phaseolicola (strain 1448A / Race 6) (Pseudomonas syringae pv. phaseolicola (strain 1448A / Race 6)).